The chain runs to 442 residues: Histidine--tRNA ligase (442 aa).

Belongs to the class-II aminoacyl-tRNA synthetase family. Homodimer.

Its subcellular location is the cytoplasm. The enzyme catalyses tRNA(His) + L-histidine + ATP = L-histidyl-tRNA(His) + AMP + diphosphate + H(+). The sequence is that of Histidine--tRNA ligase from Rhodopirellula baltica (strain DSM 10527 / NCIMB 13988 / SH1).